A 314-amino-acid polypeptide reads, in one-letter code: Polyamine aminopropyltransferase (314 aa).

The PABS domain maps to 4 to 241 (GMYFFEHVTP…LNFGFLLASD (238 aa)). Gln33 serves as a coordination point for S-methyl-5'-thioadenosine. 2 residues coordinate spermidine: His64 and Glu88. S-methyl-5'-thioadenosine is bound by residues Asp108 and 140–141 (DA). The active-site Proton acceptor is Asp158. Position 168 (Pro168) interacts with S-methyl-5'-thioadenosine.

Belongs to the spermidine/spermine synthase family. In terms of assembly, homodimer or homotetramer.

Its subcellular location is the cytoplasm. It carries out the reaction S-adenosyl 3-(methylsulfanyl)propylamine + putrescine = S-methyl-5'-thioadenosine + spermidine + H(+). It functions in the pathway amine and polyamine biosynthesis; spermidine biosynthesis; spermidine from putrescine: step 1/1. In terms of biological role, catalyzes the irreversible transfer of a propylamine group from the amino donor S-adenosylmethioninamine (decarboxy-AdoMet) to putrescine (1,4-diaminobutane) to yield spermidine. The sequence is that of Polyamine aminopropyltransferase from Thermus thermophilus (strain ATCC BAA-163 / DSM 7039 / HB27).